Here is a 437-residue protein sequence, read N- to C-terminus: O-antigen export system ATP-binding protein RfbB (437 aa).

Residues 37–256 (LRGKRQSRDA…YREAISLAEA (220 aa)) form the ABC transporter domain. 69 to 76 (GRNGSGKS) is a binding site for ATP.

Belongs to the ABC transporter superfamily.

It localises to the cell inner membrane. Functionally, may form an ATP-driven O-antigen export apparatus, in association with RfbA. The protein is O-antigen export system ATP-binding protein RfbB (rfbB) of Myxococcus xanthus.